The sequence spans 256 residues: Histone H1 (256 aa).

Low complexity-rich tracts occupy residues 1 to 19 (MSDS…PPAT) and 27 to 43 (KKAS…ASAT). 2 disordered regions span residues 1–53 (MSDS…QQMV) and 108–256 (GKGA…AAKK). Phosphoserine is present on Ser11. The H15 domain maps to 45–119 (SHPPTQQMVD…GASGSFKLSA (75 aa)). Composition is skewed to basic and acidic residues over residues 121-140 (AKKE…EKKV) and 176-193 (KTAE…DAKK). Residues 194–229 (TGIIKSKPAATKAKVTAAKPKAVVAKASKAKPAVSA) are compositionally biased toward low complexity. Basic residues predominate over residues 245-256 (KKPKAKTTAAKK).

This sequence belongs to the histone H1/H5 family. In terms of processing, phosphorylated in oocytes during prophase I of meiosis.

The protein localises to the nucleus. Its subcellular location is the chromosome. Histones H1 are necessary for the condensation of nucleosome chains into higher-order structures. This Drosophila melanogaster (Fruit fly) protein is Histone H1 (His1).